A 1690-amino-acid polypeptide reads, in one-letter code: rRNA biogenesis protein rrp5 (1690 aa).

Disordered regions lie at residues 1-42 (MAGN…GASS) and 59-90 (FMESASGTAELSKKTRPKKKGSKKSSKSELDN). Residues 11 to 32 (ASEGSDSQGNERISSLSANEAT) are compositionally biased toward polar residues. Residues 72–83 (KTRPKKKGSKKS) are compositionally biased toward basic residues. 13 consecutive S1 motif domains span residues 109-209 (GSLI…LSLK), 226-289 (GSMI…LTAT), 306-376 (GDYI…VSFL), 398-473 (GFIV…LSFQ), 490-559 (GQFV…LTLK), 579-648 (GTQT…VGCR), 666-739 (GSVL…LSLK), 761-830 (GIKY…MSFK), 866-942 (GKIT…ISHR), 973-1044 (GDEV…IGPL), 1053-1122 (GSRL…LSAR), 1147-1216 (GDIC…MSLK), and 1236-1307 (GSNL…LGLK). A disordered region spans residues 1313-1424 (SDSDISMSDN…EEKDLDEIPS (112 aa)). 3 stretches are compositionally biased toward acidic residues: residues 1348 to 1367 (QSEEVENLESAGDEDEEEEP), 1390 to 1400 (DTEDSEDEEDE), and 1412 to 1421 (FDDEEKDLDE). T1391 carries the post-translational modification Phosphothreonine. A Phosphoserine modification is found at S1394. 3 HAT repeats span residues 1420-1452 (DEIPSTAADFERQLLSSPNSSLLWISYMAYHLN), 1526-1558 (GKVDLADEYMQLMLKNFKQVPSVWIQYATFLLN), and 1596-1628 (GDPERGRTIFEGLLSSYPKRLDLWNVLIDMEMK). 2 positions are modified to phosphoserine: S1684 and S1686.

As to quaternary structure, component of the ribosomal small subunit (SSU) processome.

It is found in the nucleus. The protein localises to the nucleolus. Involved in the biogenesis of rRNA. Required for the formation of 18S and 5.8S rRNA. This Schizosaccharomyces pombe (strain 972 / ATCC 24843) (Fission yeast) protein is rRNA biogenesis protein rrp5.